The following is a 368-amino-acid chain: MSLYPIYNFSAGPAVLPEAVLETARQEMLDYNGTGFPVMAMSHRSEMFLSILHHAEQDLRQLLKVPDNYKILFLQGGATTQFNMAAMNLAHGFRTADAVVTGNWSRIAYEQMSRLTDTEIRLAAHGGEQFDYLDLPPVETWDVAPDSAFVHFAVNETVNGLQYREVPRLSEGMPPLVCDMSSEILSREFDVADYGLIYAGAQKNIGPAGVTVVIVREDLLERCPNDIPDVFNYRSHINRDGMYNTPSTYAIYMSGLVFRWLQAQGGVKKIEAVNRLKAQTLYETIDGSGGFYINRIRPNARSKMNVVFQTGDEELDRRFVLEAELQGLCLLKGYKTVGGMRASIYNAMPLEGVRALADFMRDFQRRYG.

R44 is an L-glutamate binding site. Pyridoxal 5'-phosphate-binding positions include 78 to 79 (AT), W104, T157, D179, and Q202. N6-(pyridoxal phosphate)lysine is present on K203. 244–245 (NT) lines the pyridoxal 5'-phosphate pocket.

The protein belongs to the class-V pyridoxal-phosphate-dependent aminotransferase family. SerC subfamily. In terms of assembly, homodimer. Requires pyridoxal 5'-phosphate as cofactor.

It is found in the cytoplasm. It carries out the reaction O-phospho-L-serine + 2-oxoglutarate = 3-phosphooxypyruvate + L-glutamate. The catalysed reaction is 4-(phosphooxy)-L-threonine + 2-oxoglutarate = (R)-3-hydroxy-2-oxo-4-phosphooxybutanoate + L-glutamate. The protein operates within amino-acid biosynthesis; L-serine biosynthesis; L-serine from 3-phospho-D-glycerate: step 2/3. It participates in cofactor biosynthesis; pyridoxine 5'-phosphate biosynthesis; pyridoxine 5'-phosphate from D-erythrose 4-phosphate: step 3/5. Catalyzes the reversible conversion of 3-phosphohydroxypyruvate to phosphoserine and of 3-hydroxy-2-oxo-4-phosphonooxybutanoate to phosphohydroxythreonine. The sequence is that of Phosphoserine aminotransferase from Neisseria meningitidis serogroup A / serotype 4A (strain DSM 15465 / Z2491).